Reading from the N-terminus, the 278-residue chain is 4-deoxy-L-threo-5-hexosulose-uronate ketol-isomerase (278 aa).

Zn(2+) contacts are provided by His196, His198, Glu203, and His245.

It belongs to the KduI family. In terms of assembly, homohexamer. It depends on Zn(2+) as a cofactor.

It carries out the reaction 5-dehydro-4-deoxy-D-glucuronate = 3-deoxy-D-glycero-2,5-hexodiulosonate. It participates in glycan metabolism; pectin degradation; 2-dehydro-3-deoxy-D-gluconate from pectin: step 4/5. Its function is as follows. Catalyzes the isomerization of 5-dehydro-4-deoxy-D-glucuronate to 3-deoxy-D-glycero-2,5-hexodiulosonate. The polypeptide is 4-deoxy-L-threo-5-hexosulose-uronate ketol-isomerase (Escherichia coli O8 (strain IAI1)).